The chain runs to 219 residues: Envelope protein US9 homolog (219 aa).

The Intravirion segment spans residues 1–193 (MEKAEAAAVV…RHRRRRVALT (193 aa)). A Di-leucine internalization motif motif is present at residues 145–146 (LL). Residues 153–168 (DYDSESGCYYSESDNE) are acidic. Residues Ser163 and Ser165 each carry the phosphoserine; by host CK2 modification. A helical; Signal-anchor for type II membrane protein membrane pass occupies residues 194–214 (VAGVILVVVLCAISGIVGAFL). Residues 215–219 (ARVFP) are Virion surface-facing.

This sequence belongs to the alphaherpesvirinae envelope protein US9 family. Phosphorylated on serines within the acidic cluster. Phosphorylation determines whether endocytosed viral US9 traffics to the trans-Golgi network or recycles to the cell membrane.

It localises to the virion membrane. Its subcellular location is the host Golgi apparatus membrane. The protein resides in the host smooth endoplasmic reticulum membrane. The protein localises to the host cell membrane. Its function is as follows. Essential for the anterograde spread of the infection throughout the host nervous system. Together with the gE/gI heterodimer, US9 is involved in the sorting and transport of viral structural components toward axon tips. This Equine herpesvirus 1 (strain Kentucky A) (EHV-1) protein is Envelope protein US9 homolog.